The primary structure comprises 303 residues: Methionyl-tRNA formyltransferase (303 aa).

A (6S)-5,6,7,8-tetrahydrofolate-binding site is contributed by 108–111 (SDLP).

This sequence belongs to the Fmt family.

The catalysed reaction is L-methionyl-tRNA(fMet) + (6R)-10-formyltetrahydrofolate = N-formyl-L-methionyl-tRNA(fMet) + (6S)-5,6,7,8-tetrahydrofolate + H(+). Functionally, attaches a formyl group to the free amino group of methionyl-tRNA(fMet). The formyl group appears to play a dual role in the initiator identity of N-formylmethionyl-tRNA by promoting its recognition by IF2 and preventing the misappropriation of this tRNA by the elongation apparatus. This is Methionyl-tRNA formyltransferase from Rickettsia felis (strain ATCC VR-1525 / URRWXCal2) (Rickettsia azadi).